A 207-amino-acid chain; its full sequence is Serotonin N-acetyltransferase (207 aa).

The disordered stretch occupies residues 1–28; sequence MSTQSTHPLKPEAPRLPPGIPESPSCQR. Phosphothreonine; by PKA is present on Thr31. Positions 35 to 194 constitute an N-acetyltransferase domain; the sequence is SEFRCLTPED…SLTFMELHCS (160 aa). Leu124 lines the substrate pocket. Residues 124 to 126 and 132 to 137 contribute to the acetyl-CoA site; these read LAV and QQGRGP. Met159 serves as a coordination point for substrate. 168-170 provides a ligand contact to acetyl-CoA; the sequence is YER. At Ser205 the chain carries Phosphoserine.

This sequence belongs to the acetyltransferase family. AANAT subfamily. In terms of assembly, monomer. Interacts with several 14-3-3 proteins, including YWHAB, YWHAE, YWHAG and YWHAZ, preferentially when phosphorylated at Thr-31. Phosphorylation on Ser-205 also allows binding to YWHAZ, but with lower affinity. The interaction with YWHAZ considerably increases affinity for arylalkylamines and acetyl-CoA and protects the enzyme from dephosphorylation and proteasomal degradation. It may also prevent thiol-dependent inactivation. Post-translationally, cAMP-dependent phosphorylation on both N-terminal Thr-31 and C-terminal Ser-205 regulates AANAT activity by promoting interaction with 14-3-3 proteins. As to expression, highly expressed in pineal gland and at lower levels in the retina. Weak expression in several brain regions and in the pituitary gland.

It is found in the cytoplasm. The enzyme catalyses a 2-arylethylamine + acetyl-CoA = an N-acetyl-2-arylethylamine + CoA + H(+). It participates in aromatic compound metabolism; melatonin biosynthesis; melatonin from serotonin: step 1/2. Its function is as follows. Controls the night/day rhythm of melatonin production in the pineal gland. Catalyzes the N-acetylation of serotonin into N-acetylserotonin, the penultimate step in the synthesis of melatonin. In Homo sapiens (Human), this protein is Serotonin N-acetyltransferase (AANAT).